A 468-amino-acid polypeptide reads, in one-letter code: Eukaryotic translation initiation factor 3 subunit M (468 aa).

The segment at 42-61 (PLIEPLRQQEQSEEEPDRKQ) is disordered. The 172-residue stretch at 206 to 377 (DLELAQTHVV…SEFLVHRATY (172 aa)) folds into the PCI domain. The tract at residues 418–468 (MQAAAEETGQGKSGDKGAKGGDRRRNPQQQQQSQPSQPQQAREVELVGGAE) is disordered. Residues 430–442 (SGDKGAKGGDRRR) show a composition bias toward basic and acidic residues. A compositionally biased stretch (low complexity) spans 444 to 457 (PQQQQQSQPSQPQQ).

Belongs to the eIF-3 subunit M family. In terms of assembly, component of the eukaryotic translation initiation factor 3 (eIF-3) complex.

It localises to the cytoplasm. Component of the eukaryotic translation initiation factor 3 (eIF-3) complex, which is involved in protein synthesis of a specialized repertoire of mRNAs and, together with other initiation factors, stimulates binding of mRNA and methionyl-tRNAi to the 40S ribosome. The eIF-3 complex specifically targets and initiates translation of a subset of mRNAs involved in cell proliferation. In Neosartorya fischeri (strain ATCC 1020 / DSM 3700 / CBS 544.65 / FGSC A1164 / JCM 1740 / NRRL 181 / WB 181) (Aspergillus fischerianus), this protein is Eukaryotic translation initiation factor 3 subunit M.